We begin with the raw amino-acid sequence, 308 residues long: 1,4-dihydroxy-2-naphthoate octaprenyltransferase (308 aa).

Residues 1-20 (MTEQQISRTQAWLESLRPKT) lie on the Cytoplasmic side of the membrane. A helical membrane pass occupies residues 21–41 (LPLAFAAIIVGTALAWWQGHF). A topological domain (periplasmic) is located at residue Asp-42. A helical membrane pass occupies residues 43–63 (PLVALLALITAGLLQILSNLA). At 64–97 (NDYGDAVKGSDKPDRIGPLRGMQKGVITQQEMKR) the chain is on the cytoplasmic side. The helical transmembrane segment at 98–118 (ALIITVVLICLSGLALVAVAC) threads the bilayer. Over 119–123 (HTLAD) the chain is Periplasmic. The chain crosses the membrane as a helical span at residues 124–144 (FVGFLILGGLSIIAAITYTVG). Topologically, residues 145–148 (NRPY) are cytoplasmic. The helical transmembrane segment at 149–169 (GYIGLGDISVLVFFGWLSVMG) threads the bilayer. The Periplasmic portion of the chain corresponds to 170–176 (SWYLQAH). The helical transmembrane segment at 177-197 (TLIPALILPATACGLLATAVL) threads the bilayer. Residues 198-227 (NINNLRDINSDRENGKNTLVVRLGEVNARR) lie on the Cytoplasmic side of the membrane. The chain crosses the membrane as a helical span at residues 228–247 (YHACLLMGSLVCLALFNLFS). Topologically, residues 248–250 (LHS) are periplasmic. Residues 251–270 (LWGWLFLLAAPLLVKQARYV) traverse the membrane as a helical segment. Residues 271–286 (MREMDPVAMRPMLERT) lie on the Cytoplasmic side of the membrane. Residues 287 to 307 (VKGALLTNLLFVLGIFLSQWA) form a helical membrane-spanning segment. A topological domain (periplasmic) is located at residue Ala-308.

This sequence belongs to the MenA family. Type 1 subfamily.

Its subcellular location is the cell inner membrane. It catalyses the reaction an all-trans-polyprenyl diphosphate + 1,4-dihydroxy-2-naphthoate + H(+) = a 2-demethylmenaquinol + CO2 + diphosphate. The protein operates within quinol/quinone metabolism; menaquinone biosynthesis; menaquinol from 1,4-dihydroxy-2-naphthoate: step 1/2. Functionally, conversion of 1,4-dihydroxy-2-naphthoate (DHNA) to demethylmenaquinone (DMK). Attaches octaprenylpyrophosphate, a membrane-bound 40-carbon side chain to DHNA. The conversion of DHNA to DMK proceeds in three stages: the removal of the carboxyl group of DHNA as CO(2), the attachment of the isoprenoid side chain, and a quinol-to-quinone oxidation, which is thought to be spontaneous. The protein is 1,4-dihydroxy-2-naphthoate octaprenyltransferase of Escherichia coli (strain K12).